The primary structure comprises 242 residues: AA9 family lytic polysaccharide monooxygenase F (242 aa).

Positions Met1–Ala20 are cleaved as a signal peptide. Position 21 (His21) interacts with Cu(2+). The segment at Gly31 to Asn53 is disordered. Cystine bridges form between Cys71–Cys192 and Cys112–Cys116. Cu(2+) is bound at residue His101. Residues His178 and Gln187 each contribute to the O2 site. Tyr189 contributes to the Cu(2+) binding site.

The protein belongs to the polysaccharide monooxygenase AA9 family. The cofactor is Cu(2+).

It localises to the secreted. The enzyme catalyses [(1-&gt;4)-beta-D-glucosyl]n+m + reduced acceptor + O2 = 4-dehydro-beta-D-glucosyl-[(1-&gt;4)-beta-D-glucosyl]n-1 + [(1-&gt;4)-beta-D-glucosyl]m + acceptor + H2O.. Lytic polysaccharide monooxygenase (LPMO) that depolymerizes crystalline and amorphous polysaccharides via the oxidation of scissile alpha- or beta-(1-4)-glycosidic bonds, yielding C1 or C4 oxidation products. Catalysis by LPMOs requires the reduction of the active-site copper from Cu(II) to Cu(I) by a reducing agent and H(2)O(2) or O(2) as a cosubstrate. Active on hemicelluloses, including xylan, glucomannan, and xyloglucan. Shows clear activity on cellooligosaccharides, generating C4 oxidation products. Has no activity on ivory nut mannan (INM), a linear beta-1,4-linked mannan without substitutions. The sequence is that of AA9 family lytic polysaccharide monooxygenase F from Malbranchea cinnamomea (Thermophilic fungus).